We begin with the raw amino-acid sequence, 303 residues long: MDVEKFVENAIKEIRERVKDGKAIIALSGGVDSSVCTVLAHKALGDRLIPVFVDTGLMREGEPEKIKEIFGNMGLVFIDAKEEFFKALKGVTDPEEKRKVIGELFVRIFERVAEEHNAEYLIQGTIYPDIIESQGGIKSHHNVGGFPTSYKFKDVIEPLRELYKDEVREVARYLGLPKEISERMPFPGPGLAVRIVGEVTPEKVEIVRKANKIVEEELADYDKWQCFAALIGKATGVKGDVRVWGYIIAVRAVESRDGMTADPIKIDYDRLRRIALRITGEIDKVSRVVYDITPKPPATIEYE.

The 183-residue stretch at 1 to 183 (MDVEKFVENA…LGLPKEISER (183 aa)) folds into the GMPS ATP-PPase domain. Position 28-34 (28-34 (SGGVDSS)) interacts with ATP.

Heterodimer composed of a glutamine amidotransferase subunit (A) and a GMP-binding subunit (B).

The catalysed reaction is XMP + L-glutamine + ATP + H2O = GMP + L-glutamate + AMP + diphosphate + 2 H(+). It functions in the pathway purine metabolism; GMP biosynthesis; GMP from XMP (L-Gln route): step 1/1. In terms of biological role, catalyzes the synthesis of GMP from XMP. In Archaeoglobus fulgidus (strain ATCC 49558 / DSM 4304 / JCM 9628 / NBRC 100126 / VC-16), this protein is GMP synthase [glutamine-hydrolyzing] subunit B (guaAB).